Here is a 268-residue protein sequence, read N- to C-terminus: Small ribosomal subunit protein eS1 (268 aa).

Residues 1–21 are disordered; sequence MAVGKNKGLSKGGKKGGKKKV.

It belongs to the eukaryotic ribosomal protein eS1 family. As to quaternary structure, component of the small ribosomal subunit. Mature ribosomes consist of a small (40S) and a large (60S) subunit. The 40S subunit contains about 33 different proteins and 1 molecule of RNA (18S). The 60S subunit contains about 49 different proteins and 3 molecules of RNA (28S, 5.8S and 5S).

It localises to the cytoplasm. Essential for oogenesis; required for late follicle cell development. The polypeptide is Small ribosomal subunit protein eS1 (Drosophila virilis (Fruit fly)).